The primary structure comprises 177 residues: Large ribosomal subunit protein uL6 (177 aa).

This sequence belongs to the universal ribosomal protein uL6 family. In terms of assembly, part of the 50S ribosomal subunit.

Functionally, this protein binds to the 23S rRNA, and is important in its secondary structure. It is located near the subunit interface in the base of the L7/L12 stalk, and near the tRNA binding site of the peptidyltransferase center. The sequence is that of Large ribosomal subunit protein uL6 from Cupriavidus metallidurans (strain ATCC 43123 / DSM 2839 / NBRC 102507 / CH34) (Ralstonia metallidurans).